Consider the following 790-residue polypeptide: Spermatogenesis-associated protein 20 (790 aa).

Positions M1–G19 are enriched in basic residues. The disordered stretch occupies residues M1 to N67. At S5 the chain carries Phosphoserine. Over residues G23 to S36 the composition is skewed to basic and acidic residues. S653 bears the Phosphoserine mark.

It localises to the secreted. Its function is as follows. May play a role in fertility regulation. The chain is Spermatogenesis-associated protein 20 (Spata20) from Mus musculus (Mouse).